The following is a 553-amino-acid chain: Glycerol kinase 2 (553 aa).

A substrate-binding site is contributed by Thr-20. Position 24 (Arg-24) interacts with ATP. Substrate-binding residues include Arg-94, Tyr-148, and Asp-259. ATP is bound by residues Thr-281, Gly-326, and Gly-427 to Asn-431. A helical membrane pass occupies residues Ile-526–Ala-546.

It belongs to the FGGY kinase family. In terms of assembly, interacts with ARMC12. Interacts with PLD6. In terms of tissue distribution, testis-specific. Expressed in the midpiece of spermatozoa.

The protein localises to the mitochondrion outer membrane. It localises to the cytoplasm. It catalyses the reaction glycerol + ATP = sn-glycerol 3-phosphate + ADP + H(+). The protein operates within polyol metabolism; glycerol degradation via glycerol kinase pathway; sn-glycerol 3-phosphate from glycerol: step 1/1. In terms of biological role, key enzyme in the regulation of glycerol uptake and metabolism. Essential for male fertility and sperm mitochondrial sheath formation. Required for proper arrangement of crescent-like mitochondria to form the mitochondrial sheath during spermatogenesis. Can induce mitochondrial clustering through interactions with PLD6 and up-regulation of phosphatidic acid synthesis in the mitochondria. The polypeptide is Glycerol kinase 2 (GK2) (Homo sapiens (Human)).